A 239-amino-acid chain; its full sequence is Ribonuclease P protein component 3 (239 aa).

This sequence belongs to the eukaryotic/archaeal RNase P protein component 3 family. As to quaternary structure, consists of a catalytic RNA component and at least 4-5 protein subunits.

The protein resides in the cytoplasm. It carries out the reaction Endonucleolytic cleavage of RNA, removing 5'-extranucleotides from tRNA precursor.. Its function is as follows. Part of ribonuclease P, a protein complex that generates mature tRNA molecules by cleaving their 5'-ends. The protein is Ribonuclease P protein component 3 of Methanosarcina mazei (strain ATCC BAA-159 / DSM 3647 / Goe1 / Go1 / JCM 11833 / OCM 88) (Methanosarcina frisia).